A 149-amino-acid chain; its full sequence is Large ribosomal subunit protein uL15 (149 aa).

The segment at His-8–Ala-49 is disordered. A compositionally biased stretch (low complexity) spans Gly-31–Lys-45.

This sequence belongs to the universal ribosomal protein uL15 family. In terms of assembly, part of the 50S ribosomal subunit.

Its function is as follows. Binds to the 23S rRNA. In Corynebacterium aurimucosum (strain ATCC 700975 / DSM 44827 / CIP 107346 / CN-1) (Corynebacterium nigricans), this protein is Large ribosomal subunit protein uL15.